Consider the following 290-residue polypeptide: Ribosomal RNA small subunit methyltransferase A (290 aa).

6 residues coordinate S-adenosyl-L-methionine: N27, L29, G54, E75, D100, and N125.

This sequence belongs to the class I-like SAM-binding methyltransferase superfamily. rRNA adenine N(6)-methyltransferase family. RsmA subfamily.

Its subcellular location is the cytoplasm. It catalyses the reaction adenosine(1518)/adenosine(1519) in 16S rRNA + 4 S-adenosyl-L-methionine = N(6)-dimethyladenosine(1518)/N(6)-dimethyladenosine(1519) in 16S rRNA + 4 S-adenosyl-L-homocysteine + 4 H(+). Specifically dimethylates two adjacent adenosines (A1518 and A1519) in the loop of a conserved hairpin near the 3'-end of 16S rRNA in the 30S particle. May play a critical role in biogenesis of 30S subunits. This Streptococcus pneumoniae (strain ATCC BAA-255 / R6) protein is Ribosomal RNA small subunit methyltransferase A.